Reading from the N-terminus, the 345-residue chain is MCSVLAIALVVALLGDMHPGVKSSTTSAVTSPSNTTVTSTTSISTSNNVSSAVTTTVQTSTSSASTSVIATTQKEGHLYTVNCEASYSYDQVSLNATCKVILLNNTKNPDILSVTCYARTDCKGPFTQVGYLSAFPSNDKGKLHLSYNATAQELLISGLRPQETTEYTCSFFSWGRHHNATWDLFTYPIYAVYGTRLNATTMRVRVLLQEHEHCLLNGSSLYHPNSTVHLHQGDQLIPPWNISNVTYNGQRLREFVFYLNGTYTVVRLHVQIAGRSFTTTYVFIKSDPLFEDRLLAYGVLAFLVFMVIILLYVTYMLARRRDWSYKRLEEPVEEKKHPVPYFKQW.

Positions 1–23 (MCSVLAIALVVALLGDMHPGVKS) are cleaved as a signal peptide. A disordered region spans residues 23-43 (SSTTSAVTSPSNTTVTSTTSI). The Virion surface segment spans residues 24–293 (STTSAVTSPS…IKSDPLFEDR (270 aa)). N-linked (GlcNAc...) asparagine; by host glycosylation is found at asparagine 34, asparagine 48, asparagine 95, asparagine 104, asparagine 148, asparagine 179, asparagine 198, asparagine 217, asparagine 225, asparagine 241, asparagine 244, and asparagine 260. Residues 91-190 (QVSLNATCKV…TWDLFTYPIY (100 aa)) form the Ig-like V-type domain. Residues 294 to 314 (LLAYGVLAFLVFMVIILLYVT) form a helical membrane-spanning segment. The Intravirion portion of the chain corresponds to 315 to 345 (YMLARRRDWSYKRLEEPVEEKKHPVPYFKQW).

It is found in the virion membrane. Its function is as follows. Serves as a receptor for the Fc part of human IgG. May thus be involved in interfering with host Ig-mediated immune responses. The chain is Viral Fc-gamma receptor-like protein UL119 (UL119/UL118) from Homo sapiens (Human).